A 335-amino-acid polypeptide reads, in one-letter code: Tetraacyldisaccharide 4'-kinase (335 aa).

58 to 65 (TVGGNGKT) provides a ligand contact to ATP.

This sequence belongs to the LpxK family.

The enzyme catalyses a lipid A disaccharide + ATP = a lipid IVA + ADP + H(+). Its pathway is glycolipid biosynthesis; lipid IV(A) biosynthesis; lipid IV(A) from (3R)-3-hydroxytetradecanoyl-[acyl-carrier-protein] and UDP-N-acetyl-alpha-D-glucosamine: step 6/6. Its function is as follows. Transfers the gamma-phosphate of ATP to the 4'-position of a tetraacyldisaccharide 1-phosphate intermediate (termed DS-1-P) to form tetraacyldisaccharide 1,4'-bis-phosphate (lipid IVA). This is Tetraacyldisaccharide 4'-kinase from Dichelobacter nodosus (strain VCS1703A).